Reading from the N-terminus, the 731-residue chain is Ribonuclease R (731 aa).

The region spanning 260–589 (RTDLRHFPFF…LHRVIKYLLF (330 aa)) is the RNB domain. Positions 647–728 (GCILNGVISN…NEKKIELSLY (82 aa)) constitute an S1 motif domain.

Belongs to the RNR ribonuclease family. RNase R subfamily. Monomer.

It is found in the cytoplasm. It carries out the reaction Exonucleolytic cleavage in the 3'- to 5'-direction to yield nucleoside 5'-phosphates.. Functionally, 3'-5' exoribonuclease that releases 5'-nucleoside monophosphates and is involved in maturation of structured RNAs. The sequence is that of Ribonuclease R from Buchnera aphidicola subsp. Acyrthosiphon pisum (strain APS) (Acyrthosiphon pisum symbiotic bacterium).